A 703-amino-acid polypeptide reads, in one-letter code: Solute carrier family 28 member 3 (703 aa).

Residues 1 to 19 are compositionally biased toward basic and acidic residues; sequence MSRADPGKNSEPSESKMSL. Residues 1 to 93 form a disordered region; sequence MSRADPGKNS…DPEDDSEDEH (93 aa). Over 1-117 the chain is Cytoplasmic; the sequence is MSRADPGKNS…FCRKHRVVLR (117 aa). Polar residues predominate over residues 44 to 61; that stretch reads QNTPGNSTVRNRVVQSGE. Positions 63-72 are enriched in basic and acidic residues; that stretch reads GHAKQDDRQI. Residues 118–138 form a helical membrane-spanning segment; that stretch reads STIWAVLLTGFLALVIAACAI. The Extracellular portion of the chain corresponds to 139–143; that stretch reads NFHRA. Residues 144–164 form a helical membrane-spanning segment; sequence LPLFVITLVTIFFVIWDHLMA. At 165-188 the chain is on the cytoplasmic side; sequence KYEQRIDDFLSPGRRLLDRHWFWL. Residues 189-209 form a helical membrane-spanning segment; that stretch reads KWVVWSSLILAIILWLSLDTA. The Extracellular portion of the chain corresponds to 210–212; that stretch reads KLG. A helical membrane pass occupies residues 213–234; sequence QQNLVSFGGLIMYLILLFLFSK. Residues 235 to 242 are Cytoplasmic-facing; it reads HPTRVYWR. Residues 243–262 form a helical membrane-spanning segment; sequence PVFWGIGLQFLLGLLILRTR. Residues 263-299 are Extracellular-facing; sequence PGFVAFDWMGRQVQTFLGYTDTGARFVFGEKYTDHFF. Residues 300–320 traverse the membrane as a helical segment; sequence AFKILPIVVFFSTVMSMLYYL. Residues 321–344 lie on the Cytoplasmic side of the membrane; that stretch reads GLMQWIIRKVGWLMLVTMGSSPIE. Residues 345–363 constitute an intramembrane region (helical); sequence SVVAAGNIFIGQTESPLLV. The Cytoplasmic portion of the chain corresponds to 364–376; that stretch reads QPYLPHVTKSELH. Residues 377–399 traverse the membrane as a helical segment; it reads TIMTAGFATIAGSVLGAYISFGV. Topologically, residues 400 to 401 are extracellular; the sequence is SS. A helical membrane pass occupies residues 402–423; sequence THLLTASVMSAPAALAVAKLFW. Over 424-458 the chain is Cytoplasmic; sequence PETEKPKITLKSAMKMENGDSRNLLEAASQGASSS. A helical transmembrane segment spans residues 459-484; sequence IPLVANIAANLIAFLALLSFVNSALS. Residues 485–522 lie on the Extracellular side of the membrane; it reads WFGSMFNYPELSFELICSYIFMPFSFMMGVDWQDSFMV. The helical intramembrane region spans 523-542; that stretch reads AKLIGYKTFFNEFVAYDHLS. The Extracellular portion of the chain corresponds to 543 to 581; sequence KLINLRKAAGPKFVNGVQQYMSIRSETIATYALCGFANF. Residues 582–592 traverse the membrane as a helical segment; that stretch reads GSLGIVIGGLT. The Cytoplasmic portion of the chain corresponds to 593–605; it reads SIAPSRKRDIASG. Residues 606–628 traverse the membrane as a helical segment; it reads AMRALIAGTIACFMTACIAGILS. Over 629–703 the chain is Extracellular; it reads DTPVDINCHH…LNCNWIPNKL (75 aa).

It belongs to the concentrative nucleoside transporter (CNT) (TC 2.A.41) family. Homotrimer.

It is found in the cell membrane. It carries out the reaction thymidine(out) + 2 Na(+)(out) = thymidine(in) + 2 Na(+)(in). The catalysed reaction is cytidine(out) + 2 Na(+)(out) = cytidine(in) + 2 Na(+)(in). It catalyses the reaction uridine(out) + 2 Na(+)(out) = uridine(in) + 2 Na(+)(in). The enzyme catalyses adenosine(out) + 2 Na(+)(out) = adenosine(in) + 2 Na(+)(in). It carries out the reaction guanosine(out) + 2 Na(+)(out) = guanosine(in) + 2 Na(+)(in). The catalysed reaction is inosine(out) + 2 Na(+)(out) = inosine(in) + 2 Na(+)(in). Functionally, sodium-dependent, pyrimidine- and purine-selective. Involved in the homeostasis of endogenous nucleosides. Exhibits the transport characteristics of the nucleoside transport system cib or N3 subtype (N3/cib) (with marked transport of both thymidine and inosine). Employs a 2:1 sodium/nucleoside ratio. Also able to transport gemcitabine, 3'-azido-3'-deoxythymidine (AZT), ribavirin and 3-deazauridine. In Mus musculus (Mouse), this protein is Solute carrier family 28 member 3 (Slc28a3).